We begin with the raw amino-acid sequence, 217 residues long: Probable nicotinate-nucleotide adenylyltransferase (217 aa).

The protein belongs to the NadD family.

It catalyses the reaction nicotinate beta-D-ribonucleotide + ATP + H(+) = deamido-NAD(+) + diphosphate. It participates in cofactor biosynthesis; NAD(+) biosynthesis; deamido-NAD(+) from nicotinate D-ribonucleotide: step 1/1. In terms of biological role, catalyzes the reversible adenylation of nicotinate mononucleotide (NaMN) to nicotinic acid adenine dinucleotide (NaAD). In Dechloromonas aromatica (strain RCB), this protein is Probable nicotinate-nucleotide adenylyltransferase.